Consider the following 429-residue polypeptide: Homocysteine synthase (429 aa).

K210 is subject to N6-(pyridoxal phosphate)lysine.

The protein belongs to the trans-sulfuration enzymes family. In terms of assembly, homotetramer. The cofactor is pyridoxal 5'-phosphate.

Its subcellular location is the cytoplasm. It localises to the nucleus. It catalyses the reaction O-acetyl-L-homoserine + methanethiol = L-methionine + acetate + H(+). The enzyme catalyses O-acetyl-L-homoserine + hydrogen sulfide = L-homocysteine + acetate. The protein operates within amino-acid biosynthesis; L-methionine biosynthesis via de novo pathway; L-homocysteine from O-acetyl-L-homoserine. In terms of biological role, catalyzes the conversion of O-acetyl-L-homoserine (OAH) into homocysteine in the methionine biosynthesis pathway. Can also use O-succinyl-L-homoserine and L-homoserine as substrates. Also has cysteine synthase (O-acetylserine sulfhydrylase) activity in vitro, but in S.pombe, it seems only to be involved in the alternative pathway of methionine biosynthesis under cysteine deficiency conditions. The polypeptide is Homocysteine synthase (Schizosaccharomyces pombe (strain 972 / ATCC 24843) (Fission yeast)).